We begin with the raw amino-acid sequence, 705 residues long: MKKYLAITSKGLENLLADELIALGVTDPKVVHAGVKFEAPIEVVYRCCLWSRIASRFIQILSEFDVRDDMDLYLGASSINWPSYFSADKTLVVDFNGTNREIRNSQYGALKVKDAIVDRFTKADLARPNISKVEPDLRVHMRLSGEKGILGFDLVGSGLHQRGYRTEAGRAPLRETLAAALVMRSTWDESKPLLDPMCGSGTLLIEAALMACEMAPGVKREKWCFEALNDFDAELWAEIRSEARVKSRRGVKKVDARFYGFDRDYRVIQTARENARRAGVEDLITFDVGDATKVECPEGFENGVILCNPPYGERLSTEPALIALYSEFGRQLKEVFGGCTASIYSSNDDLLACLRMRADKQFKLNNGALPCVQKNYSITESAERKEAVSIEVAPEFMNRLKKNIGKIGKWARKEKLDCYRIYDADLPDYNAAIDVYKDYIIIQEYAAPKTISEDKARRRLTDMIRATVLVTGVETNNVILKVRQKQSGKNQYQKLAEKSRYFDVEEYGVKLIVNLQDYLDTGLFLDHKLTRKMLGEIAAGKDFLNLFAYTGSATVHAACGGAKSTMTIDMSRTYLEWAQKNMNTNGQTGTQHQFLQADCLQWLQQADGEFDLIFIDPPTFSNSKRMEQTFDVQRDHIMLLENLKRMLRENGTIVFSNNKRNFKMDEAGLEKAGLKAKNISKQTLPLDFARNKHIHNCWIITHKED.

Residues valine 43–leucine 154 enclose the THUMP domain.

This sequence belongs to the methyltransferase superfamily. RlmKL family.

It localises to the cytoplasm. The catalysed reaction is guanosine(2445) in 23S rRNA + S-adenosyl-L-methionine = N(2)-methylguanosine(2445) in 23S rRNA + S-adenosyl-L-homocysteine + H(+). The enzyme catalyses guanosine(2069) in 23S rRNA + S-adenosyl-L-methionine = N(2)-methylguanosine(2069) in 23S rRNA + S-adenosyl-L-homocysteine + H(+). Its function is as follows. Specifically methylates the guanine in position 2445 (m2G2445) and the guanine in position 2069 (m7G2069) of 23S rRNA. The chain is Ribosomal RNA large subunit methyltransferase K/L from Aliivibrio fischeri (strain ATCC 700601 / ES114) (Vibrio fischeri).